Here is a 128-residue protein sequence, read N- to C-terminus: ATP synthase epsilon chain (128 aa).

This sequence belongs to the ATPase epsilon chain family. In terms of assembly, F-type ATPases have 2 components, CF(1) - the catalytic core - and CF(0) - the membrane proton channel. CF(1) has five subunits: alpha(3), beta(3), gamma(1), delta(1), epsilon(1). CF(0) has three main subunits: a, b and c.

The protein localises to the cell inner membrane. Its function is as follows. Produces ATP from ADP in the presence of a proton gradient across the membrane. This is ATP synthase epsilon chain from Sulfurovum sp. (strain NBC37-1).